Consider the following 333-residue polypeptide: 4-hydroxyproline epimerase (333 aa).

Cys90 (proton acceptor) is an active-site residue. Substrate is bound by residues Gly91–His92 and Asp249. Cys253 (proton donor) is an active-site residue. A substrate-binding site is contributed by Gly254–Thr255.

This sequence belongs to the proline racemase family. As to quaternary structure, homodimer.

It catalyses the reaction trans-4-hydroxy-L-proline = cis-4-hydroxy-D-proline. Its activity is regulated as follows. Inhibited by iodoacetate, iodoacetamide and by high amounts (10 mM) of pyrrole-2-carboxylic acid (PYC). Not inhibited by PYC at 1 mM. Its function is as follows. Allows intracellular utilization of 4-hydroxyproline, one of the major constituents of host collagen, by converting 4-hydroxy-L-proline to 4-hydroxy-D-proline, which can be further metabolized by intracellular 4-hydroxy-D-proline oxidases. Strong B-cell mitogen. Plays an important role in the regulation of intra- and extracellular amino acid pools, allowing the bacterium to profit from host precursors and enzymatic pathways. The polypeptide is 4-hydroxyproline epimerase (Brucella melitensis biotype 1 (strain ATCC 23456 / CCUG 17765 / NCTC 10094 / 16M)).